The primary structure comprises 371 residues: Dual-specificity RNA methyltransferase RlmN (371 aa).

Glu-99 acts as the Proton acceptor in catalysis. Positions 106 to 333 (DDNRATLCIS…AIRRASKGQD (228 aa)) constitute a Radical SAM core domain. A disulfide bond links Cys-113 and Cys-338. [4Fe-4S] cluster contacts are provided by Cys-120, Cys-124, and Cys-127. S-adenosyl-L-methionine-binding positions include 165–166 (GE), Ser-197, 219–221 (SLN), and Asn-295. Cys-338 serves as the catalytic S-methylcysteine intermediate. The disordered stretch occupies residues 345 to 371 (LTVSPPAQESERNSARPDRSQGKGKHL). Residues 353–365 (ESERNSARPDRSQ) show a composition bias toward basic and acidic residues.

Belongs to the radical SAM superfamily. RlmN family. The cofactor is [4Fe-4S] cluster.

It localises to the cytoplasm. It carries out the reaction adenosine(2503) in 23S rRNA + 2 reduced [2Fe-2S]-[ferredoxin] + 2 S-adenosyl-L-methionine = 2-methyladenosine(2503) in 23S rRNA + 5'-deoxyadenosine + L-methionine + 2 oxidized [2Fe-2S]-[ferredoxin] + S-adenosyl-L-homocysteine. The catalysed reaction is adenosine(37) in tRNA + 2 reduced [2Fe-2S]-[ferredoxin] + 2 S-adenosyl-L-methionine = 2-methyladenosine(37) in tRNA + 5'-deoxyadenosine + L-methionine + 2 oxidized [2Fe-2S]-[ferredoxin] + S-adenosyl-L-homocysteine. Functionally, specifically methylates position 2 of adenine 2503 in 23S rRNA and position 2 of adenine 37 in tRNAs. m2A2503 modification seems to play a crucial role in the proofreading step occurring at the peptidyl transferase center and thus would serve to optimize ribosomal fidelity. This Syntrophotalea carbinolica (strain DSM 2380 / NBRC 103641 / GraBd1) (Pelobacter carbinolicus) protein is Dual-specificity RNA methyltransferase RlmN.